The following is a 248-amino-acid chain: MVGSRHPDQCAKRWHHSLDPNVKRGPWTMEEDSSLLEAVQKIGRDWKEIGRELFPSRSTTDIKNRYVILSRRRGPSPAIPENCSSIDIETHSSSLADSKPPIPAELLTPEVDFSIANTPCELDSSNLAPDTLSINMTLPSDLPSYLSLPLPDTAETDHALDESSTAWEIPDWTAFDNQCLFTPGASELEGSFTSRNHEEPPQPLPVPDIPGPSTLVLEDLRPETVNLVIDTLLRTNSKFGMRMYNTGS.

Residues 1-22 (MVGSRHPDQCAKRWHHSLDPNV) are compositionally biased toward basic and acidic residues. The tract at residues 1–25 (MVGSRHPDQCAKRWHHSLDPNVKRG) is disordered. In terms of domain architecture, HTH myb-type spans 19–74 (DPNVKRGPWTMEEDSSLLEAVQKIGRDWKEIGRELFPSRSTTDIKNRYVILSRRRG). The H-T-H motif DNA-binding region spans 46–70 (WKEIGRELFPSRSTTDIKNRYVILS). A disordered region spans residues 186–208 (SELEGSFTSRNHEEPPQPLPVPD).

The protein localises to the nucleus. Functionally, transcription factor that regulates the expression of the gene cluster that mediates the biosynthesis of cichorine, a phytotoxin active against knapweed, corn, and soybeans. The chain is Transcription factor cicD from Emericella nidulans (strain FGSC A4 / ATCC 38163 / CBS 112.46 / NRRL 194 / M139) (Aspergillus nidulans).